The chain runs to 308 residues: uncharacterized protein (308 aa).

Transmembrane regions (helical) follow at residues 6–26, 31–51, 63–83, 100–120, 128–148, 162–182, 195–215, 221–241, 257–277, and 287–307; these read VVLI…FGIL, AKIL…FLTI, FLKL…LAYL, ILVS…LGMF, AIFC…YVGI, MAKF…FFGF, LNYL…LSLS, FGVF…PATA, VLLV…GTLY, and SIFI…WILL.

This sequence belongs to the auxin efflux carrier (TC 2.A.69) family.

The protein localises to the cell membrane. This is an uncharacterized protein from Methanocaldococcus jannaschii (strain ATCC 43067 / DSM 2661 / JAL-1 / JCM 10045 / NBRC 100440) (Methanococcus jannaschii).